A 307-amino-acid polypeptide reads, in one-letter code: Lactamase-like protein vrtG (307 aa).

Positions 97, 99, 101, and 102 each coordinate Zn(2+). Residue D101 is the Proton donor/acceptor of the active site.

It belongs to the metallo-beta-lactamase superfamily. Zn(2+) is required as a cofactor.

It participates in secondary metabolite biosynthesis; terpenoid biosynthesis. In terms of biological role, lactamase-like protein; part of the gene cluster that mediates the biosynthesis of viridicatumtoxin, a tetracycline-like fungal meroterpenoid with a unique, fused spirobicyclic ring system. The first step of the pathway is the production of the malonamoyl-CoA starter unit for the polyketide synthase vrtA. The aldolase vrtJ may be involved in the synthesis of the malonamate substrate for malonamoyl-CoA synthetase vrtB. The polyketide synthase vrtA then may utilize the malonamoyl-CoA starter unit, followed by sequential condensation of eight malonyl-CoA units to form the polyketide backbone. The cyclization of the last ring could be mediated by the lactamase-like protein vrtG. The proposed post-PKS tailoring steps are a hydroxylation at C5 catalyzed the cytochrome P450 monooxygenase vrtE, a hydroxylation at C12a catalyzed by VrtH and/or VrtI, and an O-methylation by the O-methyltransferase vrtF. VrtC is then proposed to catalyze the transfer of a geranyl group synthesized by vrtD to the aromatic C ring of the tetracyclic polyketide intermediate of viridicatumtoxin to yield previridicatumtoxin. Finally, the cytochrome P450 monooxygenase vrtK catalyzes the spirocyclization of the geranyl moiety of previridicatumtoxin to afford viridicatumtoxin. The chain is Lactamase-like protein vrtG from Penicillium aethiopicum.